A 75-amino-acid chain; its full sequence is Large ribosomal subunit protein bL31 (75 aa).

Belongs to the bacterial ribosomal protein bL31 family. Type A subfamily. Part of the 50S ribosomal subunit.

Its function is as follows. Binds the 23S rRNA. In Bradyrhizobium diazoefficiens (strain JCM 10833 / BCRC 13528 / IAM 13628 / NBRC 14792 / USDA 110), this protein is Large ribosomal subunit protein bL31.